Consider the following 2193-residue polypeptide: Genome polyprotein (2193 aa).

Glycine 2 carries N-myristoyl glycine; by host lipidation. Residues 2–1503 are Cytoplasmic-facing; that stretch reads GAQVSTQKTG…HVSRAFICLQ (1502 aa). Positions 565–582 are amphipathic alpha-helix; it reads QLLQGDVEEAVNRAVARV. Catalysis depends on for protease 2A activity residues histidine 880 and aspartate 898. 2 residues coordinate Zn(2+): cysteine 915 and cysteine 917. The For protease 2A activity role is filled by cysteine 969. Zn(2+)-binding residues include cysteine 975 and histidine 977. The membrane-binding stretch occupies residues 1109-1181; that stretch reads SNGWLKKFTE…EQSAPSQSDQ (73 aa). The segment at 1109–1247 is oligomerization; it reads SNGWLKKFTE…SPGAGKSVAT (139 aa). An RNA-binding region spans residues 1130–1134; it reads AIKIQ. The SF3 helicase domain maps to 1213 to 1369; it reads EKKMSNYIQF…SMYSQNGKIN (157 aa). The Zn(2+) site is built by cysteine 1377, cysteine 1389, and cysteine 1394. The C4-type; degenerate zinc finger occupies 1377 to 1394; that stretch reads CDEECCPVNFKRCCPLVC. The RNA-binding stretch occupies residues 1421-1428; it reads EYNHRHSV. The interval 1432–1437 is oligomerization; it reads LEALFQ. Residues 1504–1519 lie within the membrane without spanning it; the sequence is ALTTFVSVAGIIYIIY. Residues 1520–2193 lie on the Cytoplasmic side of the membrane; that stretch reads KLFAGFQGAY…TLRRKWLDSF (674 aa). An O-(5'-phospho-RNA)-tyrosine modification is found at tyrosine 1529. A Peptidase C3 domain is found at 1549 to 1727; that stretch reads GPAFEFAVAM…FSAALLRHYF (179 aa). Catalysis depends on for protease 3C activity residues histidine 1588, glutamate 1619, and cysteine 1695. A RdRp catalytic domain is found at 1958–2074; sequence GHLIAFDYSG…SYPWPIDASL (117 aa). Mg(2+) is bound by residues aspartate 1964 and aspartate 2060.

The protein belongs to the picornaviruses polyprotein family. In terms of assembly, interacts with capsid protein VP1 and capsid protein VP3 to form heterotrimeric protomers. As to quaternary structure, interacts with capsid protein VP0, and capsid protein VP3 to form heterotrimeric protomers. Five protomers subsequently associate to form pentamers which serve as building blocks for the capsid. Interacts with capsid protein VP2, capsid protein VP3 and capsid protein VP4 following cleavage of capsid protein VP0. Interacts with capsid protein VP1 and capsid protein VP3 in the mature capsid. Interacts with host CD55; this interaction promotes virus attachment to the host cell and subsequent internalization. In terms of assembly, interacts with capsid protein VP0 and capsid protein VP1 to form heterotrimeric protomers. Five protomers subsequently associate to form pentamers which serve as building blocks for the capsid. Interacts with capsid protein VP4 in the mature capsid. Interacts with protein 2C; this interaction may be important for virion morphogenesis. Interacts with host CD55; this interaction promotes virus attachment to the host cell and subsequent internalization. As to quaternary structure, interacts with capsid protein VP1 and capsid protein VP3. Homodimer. In terms of assembly, homohexamer; forms a hexameric ring structure with 6-fold symmetry characteristic of AAA+ ATPases. Interacts (via N-terminus) with host RTN3 (via reticulon domain); this interaction is important for viral replication. Interacts with capsid protein VP3; this interaction may be important for virion morphogenesis. As to quaternary structure, interacts with protein 3CD. Homodimer. Interacts with host GBF1. Interacts (via GOLD domain) with host ACBD3 (via GOLD domain); this interaction allows the formation of a viral protein 3A/ACBD3 heterotetramer with a 2:2 stoichiometry, which will stimulate the recruitment of host PI4KB in order to synthesize PI4P at the viral RNA replication sites. In terms of assembly, interacts with RNA-directed RNA polymerase. As to quaternary structure, interacts with protein 3AB and with RNA-directed RNA polymerase. Interacts with Viral protein genome-linked and with protein 3CD. It depends on Mg(2+) as a cofactor. Post-translationally, specific enzymatic cleavages in vivo by the viral proteases yield processing intermediates and the mature proteins. Myristoylation is required for the formation of pentamers during virus assembly. Further assembly of 12 pentamers and a molecule of genomic RNA generates the provirion. In terms of processing, during virion maturation, immature virions are rendered infectious following cleavage of VP0 into VP4 and VP2. This maturation seems to be an autocatalytic event triggered by the presence of RNA in the capsid and it is followed by a conformational change infectious virion. Post-translationally, myristoylation is required during RNA encapsidation and formation of the mature virus particle. VPg is uridylylated by the polymerase into VPg-pUpU. This acts as a nucleotide-peptide primer for the genomic RNA replication.

It is found in the virion. The protein resides in the host cytoplasm. The protein localises to the host cytoplasmic vesicle membrane. Its subcellular location is the host nucleus. The catalysed reaction is a ribonucleoside 5'-triphosphate + H2O = a ribonucleoside 5'-diphosphate + phosphate + H(+). It carries out the reaction Selective cleavage of Tyr-|-Gly bond in the picornavirus polyprotein.. The enzyme catalyses RNA(n) + a ribonucleoside 5'-triphosphate = RNA(n+1) + diphosphate. It catalyses the reaction Selective cleavage of Gln-|-Gly bond in the poliovirus polyprotein. In other picornavirus reactions Glu may be substituted for Gln, and Ser or Thr for Gly.. With respect to regulation, replication or transcription is subject to high level of random mutations by the nucleotide analog ribavirin. Forms an icosahedral capsid of pseudo T=3 symmetry with capsid proteins VP2 and VP3. The capsid is 300 Angstroms in diameter, composed of 60 copies of each capsid protein and enclosing the viral positive strand RNA genome. Capsid protein VP1 mainly forms the vertices of the capsid. Capsid protein VP1 interacts with host cell receptor to provide virion attachment to target host cells. This attachment induces virion internalization. Tyrosine kinases are probably involved in the entry process. After binding to its receptor, the capsid undergoes conformational changes. Capsid protein VP1 N-terminus (that contains an amphipathic alpha-helix) and capsid protein VP4 are externalized. Together, they shape a pore in the host membrane through which viral genome is translocated to host cell cytoplasm. In terms of biological role, forms an icosahedral capsid of pseudo T=3 symmetry with capsid proteins VP2 and VP3. The capsid is 300 Angstroms in diameter, composed of 60 copies of each capsid protein and enclosing the viral positive strand RNA genome. Its function is as follows. Lies on the inner surface of the capsid shell. After binding to the host receptor, the capsid undergoes conformational changes. Capsid protein VP4 is released, Capsid protein VP1 N-terminus is externalized, and together, they shape a pore in the host membrane through which the viral genome is translocated into the host cell cytoplasm. Functionally, component of immature procapsids, which is cleaved into capsid proteins VP4 and VP2 after maturation. Allows the capsid to remain inactive before the maturation step. Cysteine protease that cleaves viral polyprotein and specific host proteins. It is responsible for the autocatalytic cleavage between the P1 and P2 regions, which is the first cleavage occurring in the polyprotein. Also cleaves the host translation initiation factor EIF4G1, in order to shut down the capped cellular mRNA translation. Inhibits the host nucleus-cytoplasm protein and RNA trafficking by cleaving host members of the nuclear pores. Counteracts stress granule formation probably by antagonizing its assembly or promoting its dissassembly. In terms of biological role, plays an essential role in the virus replication cycle by acting as a viroporin. Creates a pore in the host endoplasmic reticulum and as a consequence releases Ca2+ in the cytoplasm of infected cell. In turn, high levels of cytoplasmic calcium may trigger membrane trafficking and transport of viral ER-associated proteins to viroplasms, sites of viral genome replication. Its function is as follows. Induces and associates with structural rearrangements of intracellular membranes. Displays RNA-binding, nucleotide binding and NTPase activities. May play a role in virion morphogenesis and viral RNA encapsidation by interacting with the capsid protein VP3. Functionally, localizes the viral replication complex to the surface of membranous vesicles. Together with protein 3CD binds the Cis-Active RNA Element (CRE) which is involved in RNA synthesis initiation. Acts as a cofactor to stimulate the activity of 3D polymerase, maybe through a nucleid acid chaperone activity. Localizes the viral replication complex to the surface of membranous vesicles. It inhibits host cell endoplasmic reticulum-to-Golgi apparatus transport and causes the disassembly of the Golgi complex, possibly through GBF1 interaction. This would result in depletion of MHC, trail receptors and IFN receptors at the host cell surface. Plays an essential role in viral RNA replication by recruiting ACBD3 and PI4KB at the viral replication sites, thereby allowing the formation of the rearranged membranous structures where viral replication takes place. In terms of biological role, acts as a primer for viral RNA replication and remains covalently bound to viral genomic RNA. VPg is uridylylated prior to priming replication into VPg-pUpU. The oriI viral genomic sequence may act as a template for this. The VPg-pUpU is then used as primer on the genomic RNA poly(A) by the RNA-dependent RNA polymerase to replicate the viral genome. During genome replication, the VPg-RNA linkage is removed by the host TDP2, thereby accelerating replication. During the late stage of the replication cycle, host TDP2 is excluded from sites of viral RNA synthesis and encapsidation, allowing for the generation of progeny virions. Its function is as follows. Involved in the viral replication complex and viral polypeptide maturation. It exhibits protease activity with a specificity and catalytic efficiency that is different from protease 3C. Protein 3CD lacks polymerase activity. Protein 3CD binds to the 5'UTR of the viral genome. Functionally, replicates the viral genomic RNA on the surface of intracellular membranes. May form linear arrays of subunits that propagate along a strong head-to-tail interaction called interface-I. Covalently attaches UMP to a tyrosine of VPg, which is used to prime RNA synthesis. The positive stranded RNA genome is first replicated at virus induced membranous vesicles, creating a dsRNA genomic replication form. This dsRNA is then used as template to synthesize positive stranded RNA genomes. ss(+)RNA genomes are either translated, replicated or encapsidated. Major viral protease that mediates proteolytic processing of the polyprotein. Cleaves host EIF5B, contributing to host translation shutoff. Also cleaves host PABPC1, contributing to host translation shutoff. Cleaves host NLRP1, triggers host N-glycine-mediated degradation of the autoinhibitory NLRP1 N-terminal fragment. This chain is Genome polyprotein, found in Echovirus 12 (strain Travis).